A 218-amino-acid polypeptide reads, in one-letter code: RNA polymerase sigma-H factor (218 aa).

The Polymerase core binding motif lies at 62–75 (DIVQEGMIGLYKSI). Residues 182–201 (YQEISDELNRHVKSIDNALQ) constitute a DNA-binding region (H-T-H motif).

The protein belongs to the sigma-70 factor family. As to quaternary structure, interacts transiently with the RNAP core.

Its function is as follows. Sigma factors are initiation factors that promote the attachment of RNA polymerase (RNAP) to specific initiation sites and are then released. This sigma factor is involved in the transition to post-exponential phase in the beginning of sporulation. It is also required for transcription of several stationary phase genes. Association with the RNAP core increases rapidly in early exponential phase, and reamins constant expression level after. In Bacillus subtilis (strain 168), this protein is RNA polymerase sigma-H factor (sigH).